Reading from the N-terminus, the 273-residue chain is ATP synthase subunit delta (273 aa).

Belongs to the ATPase delta chain family. As to quaternary structure, F-type ATPases have 2 components, F(1) - the catalytic core - and F(0) - the membrane proton channel. F(1) has five subunits: alpha(3), beta(3), gamma(1), delta(1), epsilon(1). F(0) has three main subunits: a(1), b(2) and c(10-14). The alpha and beta chains form an alternating ring which encloses part of the gamma chain. F(1) is attached to F(0) by a central stalk formed by the gamma and epsilon chains, while a peripheral stalk is formed by the delta and b chains.

The protein resides in the cell membrane. Its function is as follows. F(1)F(0) ATP synthase produces ATP from ADP in the presence of a proton or sodium gradient. F-type ATPases consist of two structural domains, F(1) containing the extramembraneous catalytic core and F(0) containing the membrane proton channel, linked together by a central stalk and a peripheral stalk. During catalysis, ATP synthesis in the catalytic domain of F(1) is coupled via a rotary mechanism of the central stalk subunits to proton translocation. In terms of biological role, this protein is part of the stalk that links CF(0) to CF(1). It either transmits conformational changes from CF(0) to CF(1) or is implicated in proton conduction. The chain is ATP synthase subunit delta from Corynebacterium diphtheriae (strain ATCC 700971 / NCTC 13129 / Biotype gravis).